A 360-amino-acid polypeptide reads, in one-letter code: Aminomethyltransferase (360 aa).

It belongs to the GcvT family. In terms of assembly, the glycine cleavage system is composed of four proteins: P, T, L and H.

The enzyme catalyses N(6)-[(R)-S(8)-aminomethyldihydrolipoyl]-L-lysyl-[protein] + (6S)-5,6,7,8-tetrahydrofolate = N(6)-[(R)-dihydrolipoyl]-L-lysyl-[protein] + (6R)-5,10-methylene-5,6,7,8-tetrahydrofolate + NH4(+). Its function is as follows. The glycine cleavage system catalyzes the degradation of glycine. The chain is Aminomethyltransferase from Methylococcus capsulatus (strain ATCC 33009 / NCIMB 11132 / Bath).